A 763-amino-acid chain; its full sequence is F-box protein SKP2 (763 aa).

Residues 54 to 100 enclose the F-box domain; sequence KSSLMCLPTKVLLLILRTLDFNTLVTLCQVNSRFYNLITNEFLFQNV. The residue at position 594 (T594) is a Phosphothreonine.

In terms of assembly, interacts with SKP1. Component of the probable SCF(SKP2) complex containing CDC53, SKP1, RBX1 and SKP2. May interact with ribosomes.

The protein localises to the cytoplasm. It functions in the pathway protein modification; protein ubiquitination. Its function is as follows. Substrate recognition component of a SCF (SKP1-CUL1-F-box protein) E3 ubiquitin-protein ligase complex which mediates the ubiquitination and subsequent proteasomal degradation of target proteins. Probably recognizes and binds to phosphorylated target proteins. Regulates protein levels of sulfur metabolism enzymes. The SCF(SKP2) complex may regulate some transcription factors or regulators of cysteine and methionine biosynthesis. The chain is F-box protein SKP2 (SKP2) from Saccharomyces cerevisiae (strain ATCC 204508 / S288c) (Baker's yeast).